The following is a 184-amino-acid chain: Mitochondrial import inner membrane translocase subunit Tim22 (184 aa).

Disulfide bonds link Cys-59–Cys-131 and Cys-150–Cys-169. 3 helical membrane passes run 64 to 84 (ALAC…TAGI), 115 to 133 (YAKN…ECLV), and 160 to 180 (AGLK…AVID).

This sequence belongs to the Tim17/Tim22/Tim23 family. As to quaternary structure, core component of the TIM22 complex.

The protein localises to the mitochondrion inner membrane. Functionally, essential core component of the TIM22 complex, a complex that mediates the import and insertion of multi-pass transmembrane proteins into the mitochondrial inner membrane. In the TIM22 complex, it constitutes the voltage-activated and signal-gated channel. Forms a twin-pore translocase that uses the membrane potential as external driving force in 2 voltage-dependent steps. The chain is Mitochondrial import inner membrane translocase subunit Tim22 (timm22) from Xenopus laevis (African clawed frog).